Consider the following 717-residue polypeptide: Glycine--tRNA ligase beta subunit (717 aa).

This sequence belongs to the class-II aminoacyl-tRNA synthetase family. As to quaternary structure, tetramer of two alpha and two beta subunits.

It is found in the cytoplasm. It catalyses the reaction tRNA(Gly) + glycine + ATP = glycyl-tRNA(Gly) + AMP + diphosphate. The protein is Glycine--tRNA ligase beta subunit of Agrobacterium fabrum (strain C58 / ATCC 33970) (Agrobacterium tumefaciens (strain C58)).